We begin with the raw amino-acid sequence, 318 residues long: Taste receptor type 2 member 60 (318 aa).

Residues 1–7 (MNGDHMV) lie on the Extracellular side of the membrane. A helical transmembrane segment spans residues 8–28 (LGSSVTDKKAIILVTILLLLR). Residues 29 to 40 (LVAIAGNGFIIA) lie on the Cytoplasmic side of the membrane. A helical membrane pass occupies residues 41–61 (ALGVEWVLRRMLLPCDXLLVS). Topologically, residues 62–88 (LGASRFCLQSVVMGKTIYVFLHPMAFP) are extracellular. Residues 89–109 (YNPVLQFLAFQWDFLNAATLW) traverse the membrane as a helical segment. Over 110 to 128 (FSTWLSVFYCVKIAAFTHP) the chain is Cytoplasmic. A helical membrane pass occupies residues 129–149 (VFLWLKHKLSGWLPWILFSSV). Residues 150–183 (GLSSFTTILFFIGNHRMYQNYLRNHLQPWNITGN) are Extracellular-facing. Residue Asn179 is glycosylated (N-linked (GlcNAc...) asparagine). Residues 184 to 204 (SIRSYCEKFYLFPLKMITWTM) traverse the membrane as a helical segment. Topologically, residues 205–234 (PTAVFFICMILLITSLGRHMKKALLTTSGF) are cytoplasmic. Residues 235 to 255 (REPSMQAHIKALLALLSFAML) traverse the membrane as a helical segment. Residues 256–264 (FISYFLSLV) lie on the Extracellular side of the membrane. The helical transmembrane segment at 265 to 285 (FSAAGIFPPLDFKFWVWESVI) threads the bilayer. At 286-318 (YLCAAVHPIILLFSNCRLRAVLKSCRSSRCGTP) the chain is on the cytoplasmic side.

This sequence belongs to the G-protein coupled receptor T2R family.

It is found in the membrane. Receptor that may play a role in the perception of bitterness and is gustducin-linked. May play a role in sensing the chemical composition of the gastrointestinal content. The activity of this receptor may stimulate alpha gustducin, mediate PLC-beta-2 activation and lead to the gating of TRPM5. This Gorilla gorilla gorilla (Western lowland gorilla) protein is Taste receptor type 2 member 60 (TAS2R60).